We begin with the raw amino-acid sequence, 1247 residues long: Lon protease homolog 2, peroxisomal (1247 aa).

One can recognise a Lon N-terminal domain in the interval 22–402 (LPTYTLDSNL…LINEMILQLI (381 aa)). Disordered stretches follow at residues 76–103 (SGNS…ETYH), 447–503 (TKNR…DVDD), and 626–655 (DQSD…SPTS). Residues 459 to 477 (PGPASSSGPSFSNGKSSPG) show a composition bias toward low complexity. The span at 626–639 (DQSDKSQPIKDNSK) shows a compositional bias: basic and acidic residues. Position 721–728 (721–728 (GPPGTGKT)) interacts with ATP. Residues 989-1230 (TVGVGVVHGL…YDIIKIVWNE (242 aa)) form the Lon proteolytic domain. Residues S1099 and K1142 contribute to the active site.

This sequence belongs to the peptidase S16 family.

It localises to the peroxisome matrix. The catalysed reaction is Hydrolysis of proteins in presence of ATP.. Its function is as follows. ATP-dependent serine protease that mediates the selective degradation of misfolded and unassembled polypeptides in the peroxisomal matrix. Necessary for type 2 peroxisome targeting signal (PTS2)-containing protein processing and facilitates peroxisome matrix protein import. The sequence is that of Lon protease homolog 2, peroxisomal from Candida dubliniensis (strain CD36 / ATCC MYA-646 / CBS 7987 / NCPF 3949 / NRRL Y-17841) (Yeast).